A 221-amino-acid chain; its full sequence is Very-long-chain (3R)-3-hydroxyacyl-CoA dehydratase PASTICCINO 2B (221 aa).

Topologically, residues 1 to 11 (MTGVGSAVRRL) are cytoplasmic. The helical transmembrane segment at 12 to 32 (YLSVYNWAVFFGWAQVLYYAV) threads the bilayer. Residues 33-51 (TTLLESGHEAVYAAVERPL) lie on the Lumenal side of the membrane. A helical transmembrane segment spans residues 52–70 (QFAQTAAFLEILHGLVGLV). Residues 71-76 (RSPVSA) are Cytoplasmic-facing. The chain crosses the membrane as a helical span at residues 77–95 (TLPQIGSRLFLTWGILWSF). Residues 96–100 (PETHS) lie on the Lumenal side of the membrane. A helical membrane pass occupies residues 101–121 (HILVTSLVISWSITEIIRYSF). Over 122-141 (FGMKETFGFAPSWLLWLRYS) the chain is Cytoplasmic. Residues 142-165 (TFMVLYPTGISSEVGLIYIALPYM) traverse the membrane as a helical segment. Residues Tyr-147 and Glu-154 contribute to the active site. Residues 166–184 (KATEKYCLRMPNKWNFSFD) are Lumenal-facing. A helical membrane pass occupies residues 185–209 (FSYASILSLAVYVPGSPHMFTYMLA). The Cytoplasmic segment spans residues 210-221 (QRKKALAKAKAA).

This sequence belongs to the very long-chain fatty acids dehydratase HACD family.

It localises to the endoplasmic reticulum membrane. It catalyses the reaction a very-long-chain (3R)-3-hydroxyacyl-CoA = a very-long-chain (2E)-enoyl-CoA + H2O. It functions in the pathway lipid metabolism; fatty acid biosynthesis. Catalyzes the third of the four reactions of the long-chain fatty acids elongation cycle. This endoplasmic reticulum-bound enzymatic process, allows the addition of two carbons to the chain of long- and very long-chain fatty acids/VLCFAs per cycle. This enzyme catalyzes the dehydration of the 3-hydroxyacyl-CoA intermediate into trans-2,3-enoyl-CoA, within each cycle of fatty acid elongation. Thereby, it participates in the production of VLCFAs of different chain lengths that are involved in multiple biological processes as precursors of membrane lipids and lipid mediators. May be an anti-phosphatase that prevents CDKA-1 dephosphorylation and activation. Involved in the hormonal control of cell division and differentiation. Required for proliferation control of meristematic and non-meristematic cells. Negative regulator of the cell cycle. This is Very-long-chain (3R)-3-hydroxyacyl-CoA dehydratase PASTICCINO 2B (PAS2B) from Oryza sativa subsp. japonica (Rice).